We begin with the raw amino-acid sequence, 206 residues long: Cytochrome c (206 aa).

Transmembrane regions (helical) follow at residues 10–30 (IALA…VSFL), 49–69 (FMGW…LGKM), and 76–96 (KWFL…FLSL). Positions 152, 155, 156, and 182 each coordinate heme.

Monomer. Component of the photosynthetic reaction center composed of protein subunits PscA, PscC, PscB and PscD. The reaction center interacts with FmoA (which forms the Fenna-Matthews-Olson (FMO) complex). The reaction center/FmoA complex has two PscA subunits, one PscB and one PscD subunit, probably two FmoA complexes and at least one PscC subunit. Post-translationally, binds 1 heme group per subunit.

The protein localises to the cell inner membrane. In terms of biological role, monoheme cytochrome which is the immediate electron donor to P840 of the photosynthetic reaction center complex. The chain is Cytochrome c (pscC) from Chlorobaculum tepidum (strain ATCC 49652 / DSM 12025 / NBRC 103806 / TLS) (Chlorobium tepidum).